A 157-amino-acid polypeptide reads, in one-letter code: Endoribonuclease YbeY (157 aa).

Zn(2+) is bound by residues H123, H127, and H133.

This sequence belongs to the endoribonuclease YbeY family. It depends on Zn(2+) as a cofactor.

The protein resides in the cytoplasm. Functionally, single strand-specific metallo-endoribonuclease involved in late-stage 70S ribosome quality control and in maturation of the 3' terminus of the 16S rRNA. The polypeptide is Endoribonuclease YbeY (Desulfitobacterium hafniense (strain Y51)).